Consider the following 574-residue polypeptide: Protein SIX6OS1 (574 aa).

Residues 259-313 are disordered; sequence KDEQVSNRSSQNSQLLLPCESQKFVRNMNSSEARVTDKKEESSANQSKFVRSDVR. Low complexity predominate over residues 264-275; sequence SNRSSQNSQLLL. Threonine 427 bears the Phosphothreonine mark. Phosphoserine is present on serine 430. Positions 549 to 574 are disordered; it reads QDPSTMTSSSSKDFSSSQNKTQFMFF. The segment covering 552 to 565 has biased composition (low complexity); the sequence is STMTSSSSKDFSSS.

In terms of assembly, interacts with SYCE1. Interacts with proteasome subunit PSMA8; to participate in meiosis progression during spermatogenesis. As to expression, most abundantly expressed in testis. Also expressed in retina and skeletal muscle.

The protein localises to the chromosome. Meiotic protein that localizes to the central element of the synaptonemal complex and is required for chromosome synapsis during meiotic recombination. Required for the appropriate processing of intermediate recombination nodules before crossover formation. This chain is Protein SIX6OS1 (Six6os1), found in Mus musculus (Mouse).